A 354-amino-acid chain; its full sequence is Release factor glutamine methyltransferase (354 aa).

Residues 174-178 (GSGSG), aspartate 197, and asparagine 241 each bind S-adenosyl-L-methionine. Residue 241–244 (NPPY) participates in substrate binding.

Belongs to the protein N5-glutamine methyltransferase family. PrmC subfamily.

The catalysed reaction is L-glutaminyl-[peptide chain release factor] + S-adenosyl-L-methionine = N(5)-methyl-L-glutaminyl-[peptide chain release factor] + S-adenosyl-L-homocysteine + H(+). Functionally, methylates the class 1 translation termination release factors RF1/PrfA and RF2/PrfB on the glutamine residue of the universally conserved GGQ motif. The chain is Release factor glutamine methyltransferase from Fusobacterium nucleatum subsp. nucleatum (strain ATCC 25586 / DSM 15643 / BCRC 10681 / CIP 101130 / JCM 8532 / KCTC 2640 / LMG 13131 / VPI 4355).